Here is a 338-residue protein sequence, read N- to C-terminus: STEAP1 protein (338 aa).

A run of 2 helical transmembrane segments spans residues 70 to 90 and 118 to 138; these read WHLP…YTLL and PMVS…AAIV. Residues 117–264 form the Ferric oxidoreductase domain; sequence LPMVSITLLA…TLGIVSLLLG (148 aa). 2 residues coordinate FAD: Gln-139 and Arg-160. 4 helical membrane-spanning segments follow: residues 163-183, 217-237, 252-272, and 290-310; these read FGLL…SYPM, IYVS…VTSI, IQST…LIFA, and FMIA…LLLP. Position 174 (His-174) interacts with heme b. 2 residues coordinate FAD: Ser-236 and Gln-253. His-267 is a binding site for heme b.

Belongs to the STEAP family. As to quaternary structure, homotrimer. FAD serves as cofactor. It depends on heme b as a cofactor.

It is found in the endosome membrane. The protein localises to the cell membrane. In terms of biological role, does not function as a metalloreductase due to the absence of binding sites for the electron-donating substrate NADPH. This chain is STEAP1 protein (STEAP1), found in Sus scrofa (Pig).